We begin with the raw amino-acid sequence, 726 residues long: Probable dipeptidyl-peptidase 5 (726 aa).

Positions 1 to 19 (MGALQWLSITAAAASAVSA) are cleaved as a signal peptide. Asn97, Asn153, Asn259, Asn398, Asn453, and Asn529 each carry an N-linked (GlcNAc...) asparagine glycan. The active-site Charge relay system is the Ser564. N-linked (GlcNAc...) asparagine glycosylation is present at Asn611. Active-site charge relay system residues include Asp647 and His679.

The protein belongs to the peptidase S9C family.

It localises to the secreted. In terms of biological role, extracellular dipeptidyl-peptidase which removes N-terminal dipeptides sequentially from polypeptides having unsubstituted N-termini. The polypeptide is Probable dipeptidyl-peptidase 5 (dpp5) (Aspergillus niger).